The sequence spans 438 residues: tRNA(Ile)-lysidine synthase (438 aa).

Residue 27 to 32 coordinates ATP; that stretch reads SGGVDS.

This sequence belongs to the tRNA(Ile)-lysidine synthase family.

Its subcellular location is the cytoplasm. The enzyme catalyses cytidine(34) in tRNA(Ile2) + L-lysine + ATP = lysidine(34) in tRNA(Ile2) + AMP + diphosphate + H(+). Its function is as follows. Ligates lysine onto the cytidine present at position 34 of the AUA codon-specific tRNA(Ile) that contains the anticodon CAU, in an ATP-dependent manner. Cytidine is converted to lysidine, thus changing the amino acid specificity of the tRNA from methionine to isoleucine. The chain is tRNA(Ile)-lysidine synthase from Vibrio parahaemolyticus serotype O3:K6 (strain RIMD 2210633).